Consider the following 105-residue polypeptide: Pyrimidine/purine nucleoside phosphorylase (105 aa).

Belongs to the nucleoside phosphorylase PpnP family.

The catalysed reaction is a purine D-ribonucleoside + phosphate = a purine nucleobase + alpha-D-ribose 1-phosphate. It catalyses the reaction adenosine + phosphate = alpha-D-ribose 1-phosphate + adenine. The enzyme catalyses cytidine + phosphate = cytosine + alpha-D-ribose 1-phosphate. It carries out the reaction guanosine + phosphate = alpha-D-ribose 1-phosphate + guanine. The catalysed reaction is inosine + phosphate = alpha-D-ribose 1-phosphate + hypoxanthine. It catalyses the reaction thymidine + phosphate = 2-deoxy-alpha-D-ribose 1-phosphate + thymine. The enzyme catalyses uridine + phosphate = alpha-D-ribose 1-phosphate + uracil. It carries out the reaction xanthosine + phosphate = alpha-D-ribose 1-phosphate + xanthine. Its function is as follows. Catalyzes the phosphorolysis of diverse nucleosides, yielding D-ribose 1-phosphate and the respective free bases. Can use uridine, adenosine, guanosine, cytidine, thymidine, inosine and xanthosine as substrates. Also catalyzes the reverse reactions. This chain is Pyrimidine/purine nucleoside phosphorylase, found in Acidovorax ebreus (strain TPSY) (Diaphorobacter sp. (strain TPSY)).